A 457-amino-acid polypeptide reads, in one-letter code: UDP-N-acetylglucosamine 1-carboxyvinyltransferase (457 aa).

34 to 35 (KN) contacts phosphoenolpyruvate. Residue arginine 104 coordinates UDP-N-acetyl-alpha-D-glucosamine. Catalysis depends on cysteine 128, which acts as the Proton donor. Cysteine 128 carries the 2-(S-cysteinyl)pyruvic acid O-phosphothioketal modification. Positions 319 and 341 each coordinate UDP-N-acetyl-alpha-D-glucosamine. The segment at 436–457 (INKSKNRSSNSKLKEVSEIRAA) is disordered. Over residues 447–457 (KLKEVSEIRAA) the composition is skewed to basic and acidic residues.

Belongs to the EPSP synthase family. MurA subfamily.

The protein resides in the cytoplasm. It catalyses the reaction phosphoenolpyruvate + UDP-N-acetyl-alpha-D-glucosamine = UDP-N-acetyl-3-O-(1-carboxyvinyl)-alpha-D-glucosamine + phosphate. The protein operates within cell wall biogenesis; peptidoglycan biosynthesis. In terms of biological role, cell wall formation. Adds enolpyruvyl to UDP-N-acetylglucosamine. The polypeptide is UDP-N-acetylglucosamine 1-carboxyvinyltransferase (Prochlorococcus marinus subsp. pastoris (strain CCMP1986 / NIES-2087 / MED4)).